A 1175-amino-acid chain; its full sequence is Tyrosine-protein phosphatase non-receptor type 21 (1175 aa).

The region spanning 23-308 (LVARIQLLNN…ARHKFYRLNQ (286 aa)) is the FERM domain. Residues 395–421 (YSAHSTNSLNTPQPYLQPSPMSSNPSI) show a composition bias toward polar residues. The tract at residues 395–445 (YSAHSTNSLNTPQPYLQPSPMSSNPSIPGSDVMRPDYIPSHRHSALIPPSY) is disordered. Phosphoserine occurs at positions 577, 589, 590, 637, 673, 710, 711, 798, 800, and 805. The interval 663-702 (DVAPRTFSAGSQSSVFSDKVKQEGTEEQGSGGYSHKKSLS) is disordered. Residues 897-1168 (VFTEYERILK…TFVYRVLIQF (272 aa)) enclose the Tyrosine-protein phosphatase domain. Residues E1068, 1109 to 1115 (CSAGVGR), and Q1153 each bind substrate. The Phosphocysteine intermediate role is filled by C1109.

The protein belongs to the protein-tyrosine phosphatase family. Non-receptor class subfamily. As to expression, particularly abundantly in adrenal glands.

The protein resides in the cytoplasm. Its subcellular location is the cytoskeleton. The enzyme catalyses O-phospho-L-tyrosyl-[protein] + H2O = L-tyrosyl-[protein] + phosphate. The polypeptide is Tyrosine-protein phosphatase non-receptor type 21 (Ptpn21) (Rattus norvegicus (Rat)).